Reading from the N-terminus, the 90-residue chain is RNA-binding protein Hfq (90 aa).

Positions 10–70 (DGFLNLLRRE…LSTITPARPL (61 aa)) constitute a Sm domain.

It belongs to the Hfq family. Homohexamer.

RNA chaperone that binds small regulatory RNA (sRNAs) and mRNAs to facilitate mRNA translational regulation in response to envelope stress, environmental stress and changes in metabolite concentrations. Also binds with high specificity to tRNAs. In Symbiobacterium thermophilum (strain DSM 24528 / JCM 14929 / IAM 14863 / T), this protein is RNA-binding protein Hfq.